Reading from the N-terminus, the 466-residue chain is Asparagine--tRNA ligase (466 aa).

The protein belongs to the class-II aminoacyl-tRNA synthetase family. In terms of assembly, homodimer.

It localises to the cytoplasm. It catalyses the reaction tRNA(Asn) + L-asparagine + ATP = L-asparaginyl-tRNA(Asn) + AMP + diphosphate + H(+). The chain is Asparagine--tRNA ligase from Wigglesworthia glossinidia brevipalpis.